The sequence spans 256 residues: Hydroxyacylglutathione hydrolase (256 aa).

Positions 54, 56, 58, 59, 113, 136, and 174 each coordinate Zn(2+).

The protein belongs to the metallo-beta-lactamase superfamily. Glyoxalase II family. As to quaternary structure, monomer. The cofactor is Zn(2+).

It carries out the reaction an S-(2-hydroxyacyl)glutathione + H2O = a 2-hydroxy carboxylate + glutathione + H(+). It functions in the pathway secondary metabolite metabolism; methylglyoxal degradation; (R)-lactate from methylglyoxal: step 2/2. Thiolesterase that catalyzes the hydrolysis of S-D-lactoyl-glutathione to form glutathione and D-lactic acid. In Cyanothece sp. (strain PCC 7425 / ATCC 29141), this protein is Hydroxyacylglutathione hydrolase.